We begin with the raw amino-acid sequence, 264 residues long: Thymidylate synthase (264 aa).

Arg21 is a dUMP binding site. His51 lines the (6R)-5,10-methylene-5,6,7,8-tetrahydrofolate pocket. Residue 126–127 (RR) coordinates dUMP. Cys146 functions as the Nucleophile in the catalytic mechanism. Residues 166 to 169 (RSCD), Asn177, and 207 to 209 (HLY) each bind dUMP. Asp169 serves as a coordination point for (6R)-5,10-methylene-5,6,7,8-tetrahydrofolate. Ala263 contacts (6R)-5,10-methylene-5,6,7,8-tetrahydrofolate.

Belongs to the thymidylate synthase family. Bacterial-type ThyA subfamily. Homodimer.

It localises to the cytoplasm. The catalysed reaction is dUMP + (6R)-5,10-methylene-5,6,7,8-tetrahydrofolate = 7,8-dihydrofolate + dTMP. It functions in the pathway pyrimidine metabolism; dTTP biosynthesis. Catalyzes the reductive methylation of 2'-deoxyuridine-5'-monophosphate (dUMP) to 2'-deoxythymidine-5'-monophosphate (dTMP) while utilizing 5,10-methylenetetrahydrofolate (mTHF) as the methyl donor and reductant in the reaction, yielding dihydrofolate (DHF) as a by-product. This enzymatic reaction provides an intracellular de novo source of dTMP, an essential precursor for DNA biosynthesis. This chain is Thymidylate synthase, found in Edwardsiella ictaluri (strain 93-146).